The primary structure comprises 210 residues: Probable glutathione peroxidase 8 (210 aa).

A helical transmembrane segment spans residues 13-35; sequence ASRAGLFKVLLSVALCMGSLYLL.

Belongs to the glutathione peroxidase family.

The protein resides in the membrane. The catalysed reaction is 2 glutathione + H2O2 = glutathione disulfide + 2 H2O. This is Probable glutathione peroxidase 8 (gpx8) from Danio rerio (Zebrafish).